The chain runs to 438 residues: 3-phosphoshikimate 1-carboxyvinyltransferase (438 aa).

3-phosphoshikimate is bound by residues Lys21, Ser22, and Arg26. Lys21 contacts phosphoenolpyruvate. Residues Gly93 and Arg121 each contribute to the phosphoenolpyruvate site. Residues Ser166, Ser167, Gln168, Ser194, Asp324, and Lys351 each contribute to the 3-phosphoshikimate site. Gln168 provides a ligand contact to phosphoenolpyruvate. Asp324 serves as the catalytic Proton acceptor. Positions 355 and 395 each coordinate phosphoenolpyruvate.

Belongs to the EPSP synthase family. Monomer.

Its subcellular location is the cytoplasm. It carries out the reaction 3-phosphoshikimate + phosphoenolpyruvate = 5-O-(1-carboxyvinyl)-3-phosphoshikimate + phosphate. Its pathway is metabolic intermediate biosynthesis; chorismate biosynthesis. Catalyzes the transfer of the enolpyruvyl moiety of phosphoenolpyruvate (PEP) to the 5-hydroxyl of shikimate-3-phosphate (S3P) to produce enolpyruvyl shikimate-3-phosphate and inorganic phosphate. The polypeptide is 3-phosphoshikimate 1-carboxyvinyltransferase (Methanobrevibacter smithii (strain ATCC 35061 / DSM 861 / OCM 144 / PS)).